The following is a 303-amino-acid chain: N-acetyl-D-glucosamine kinase (303 aa).

ATP contacts are provided by residues 4 to 11 and 133 to 140; these read GFDIGGSK and GVGGGLIV. Residues His-157, Cys-177, Cys-179, and Cys-184 each contribute to the Zn(2+) site.

This sequence belongs to the ROK (NagC/XylR) family. NagK subfamily.

The enzyme catalyses N-acetyl-D-glucosamine + ATP = N-acetyl-D-glucosamine 6-phosphate + ADP + H(+). Its pathway is cell wall biogenesis; peptidoglycan recycling. Catalyzes the phosphorylation of N-acetyl-D-glucosamine (GlcNAc) derived from cell-wall degradation, yielding GlcNAc-6-P. The protein is N-acetyl-D-glucosamine kinase of Erwinia tasmaniensis (strain DSM 17950 / CFBP 7177 / CIP 109463 / NCPPB 4357 / Et1/99).